Consider the following 140-residue polypeptide: MAEKAAEKAEQRAADEAEKRPVEDGEKHSGRKRRRRNYDEHDEAVAKDDAQSAKAGAAADSDADDSDADDEKLEVLMAREEEDEDDLAEIDASNIISGGRRTRGKVIDYKQTAEELAAEGAAAGVDDDAEDADADFDGEG.

2 stretches are compositionally biased toward basic and acidic residues: residues 1–28 (MAEK…GEKH) and 37–51 (NYDE…DDAQ). Disordered stretches follow at residues 1 to 73 (MAEK…DEKL) and 118 to 140 (AEGA…DGEG). 2 stretches are compositionally biased toward acidic residues: residues 61–72 (SDADDSDADDEK) and 125–140 (VDDD…DGEG).

Belongs to the CHZ1 family. As to quaternary structure, forms a heterotrimer with H2A.Z-H2B, stabilizing the association of the histone dimer. Also, with a lower affinity, forms a heterotrimer with H2A-H2B.

It is found in the nucleus. In terms of biological role, forms a chaperone-bound H2A.Z-H2B complex that acts as a source for SWR1 complex-dependent H2A to H2A.Z histone replacement in chromatin. This chain is Histone H2A.Z-specific chaperone CHZ1 (CHZ1), found in Eremothecium gossypii (strain ATCC 10895 / CBS 109.51 / FGSC 9923 / NRRL Y-1056) (Yeast).